Here is a 354-residue protein sequence, read N- to C-terminus: UPF0283 membrane protein plu2581 (354 aa).

A run of 3 helical transmembrane segments spans residues 71 to 91, 101 to 121, and 214 to 234; these read MVYGSLMLLGLSAVAQFVQWI, SALGVAAAGSMIVFAGIGSLV, and ESALMIAVSPLAIVDMAFIAW.

This sequence belongs to the UPF0283 family.

It localises to the cell inner membrane. In Photorhabdus laumondii subsp. laumondii (strain DSM 15139 / CIP 105565 / TT01) (Photorhabdus luminescens subsp. laumondii), this protein is UPF0283 membrane protein plu2581.